The chain runs to 1148 residues: Signal transducer and activator of transcription B (1148 aa).

A compositionally biased stretch (low complexity) spans 1–36 (MEVTNNGSNNSSTIASTNPPTSPSTTSTSKSLPPLS). Disordered stretches follow at residues 1–81 (MEVT…NNNN), 93–178 (SSSN…LSSS), 268–312 (NTNN…PSNG), 403–425 (KNNI…NSLL), and 453–645 (YDYN…KTVT). Polar residues predominate over residues 37–47 (FLNSQWENKQS). Composition is skewed to low complexity over residues 48-81 (NNNN…NNNN), 106-178 (NNNN…LSSS), and 268-298 (NTNN…NNNN). The segment covering 466-517 (SNSSNNNSSNNNSNNNNNNNSNNNNNIIGSISPPHSSQLQQVSSPQQQQQQQ) has biased composition (low complexity). The span at 525–541 (SISSGSIKDLINSPNKE) shows a compositional bias: polar residues. The span at 544 to 557 (SKSQYPSSLSQSSS) shows a compositional bias: low complexity. Positions 561-572 (MDTDVDSTDEFD) are enriched in acidic residues. A compositionally biased stretch (low complexity) spans 574–610 (GSNSNNNNNNNNNNNNNNNSNNSNNKKRNNSNNNNLG). Residues 997 to 1122 (WQNGFIFMFL…TIPVFKREPK (126 aa)) enclose the SH2 domain.

This sequence belongs to the transcription factor STAT family. In terms of assembly, homodimer. Does not form heterodimers with other family members.

The protein resides in the nucleus. In terms of biological role, transcription factor that regulates gene expression during development. Required for optimal cell growth. The protein is Signal transducer and activator of transcription B (dstB) of Dictyostelium discoideum (Social amoeba).